Here is a 396-residue protein sequence, read N- to C-terminus: tRNA (guanine(9)-N1)-methyltransferase (396 aa).

Composition is skewed to basic and acidic residues over residues 1–18 (MEDDDRPRKYPKLNHDEV) and 52–73 (DRIDNDVKQACDEEGQDAHGKD). The disordered stretch occupies residues 1-109 (MEDDDRPRKY…KVKRKEKLVA (109 aa)). The SAM-dependent MTase TRM10-type domain occupies 139-357 (TQKKFQRSTL…QVIPQRKGGK (219 aa)). S-adenosyl-L-methionine contacts are provided by residues 264–265 (LS), G284, 288–292 (DKNRH), C296, L310, and 322–324 (QVL). D288 functions as the Proton acceptor in the catalytic mechanism. Residues 354–396 (KGGKLKSADHESEDQTPRESVEAVEAEPDGEGAAAEAGEGGKE) form a disordered region. Residues 359–374 (KSADHESEDQTPRESV) are compositionally biased toward basic and acidic residues.

The protein belongs to the class IV-like SAM-binding methyltransferase superfamily. TRM10 family. As to quaternary structure, monomer.

The protein localises to the cytoplasm. The protein resides in the nucleus. The enzyme catalyses guanosine(9) in tRNA + S-adenosyl-L-methionine = N(1)-methylguanosine(9) in tRNA + S-adenosyl-L-homocysteine + H(+). In terms of biological role, S-adenosyl-L-methionine-dependent guanine N(1)-methyltransferase that catalyzes the formation of N(1)-methylguanine at position 9 (m1G9) in cytoplasmic tRNA. The chain is tRNA (guanine(9)-N1)-methyltransferase from Aspergillus fumigatus (strain ATCC MYA-4609 / CBS 101355 / FGSC A1100 / Af293) (Neosartorya fumigata).